Reading from the N-terminus, the 122-residue chain is Small ribosomal subunit protein uS13 (122 aa).

The tract at residues 92-122 (HRKQLPVRGQRTHTNARTRKGKAKPIAGKKK) is disordered.

Belongs to the universal ribosomal protein uS13 family. In terms of assembly, part of the 30S ribosomal subunit. Forms a loose heterodimer with protein S19. Forms two bridges to the 50S subunit in the 70S ribosome.

In terms of biological role, located at the top of the head of the 30S subunit, it contacts several helices of the 16S rRNA. In the 70S ribosome it contacts the 23S rRNA (bridge B1a) and protein L5 of the 50S subunit (bridge B1b), connecting the 2 subunits; these bridges are implicated in subunit movement. Contacts the tRNAs in the A and P-sites. This is Small ribosomal subunit protein uS13 from Methylobacterium radiotolerans (strain ATCC 27329 / DSM 1819 / JCM 2831 / NBRC 15690 / NCIMB 10815 / 0-1).